The following is a 449-amino-acid chain: mRNA-capping enzyme subunit alpha (449 aa).

The active-site N6-GMP-lysine intermediate is Lys66. The interval 405 to 449 (DERKNGAYQHHSSSFSESRQQPKAEPVAEKKQTEPKYVDDDDWSD) is disordered. Positions 414 to 423 (HHSSSFSESR) are enriched in polar residues. A compositionally biased stretch (basic and acidic residues) spans 424-442 (QQPKAEPVAEKKQTEPKYV).

The protein belongs to the eukaryotic GTase family. In terms of assembly, heterodimer. The mRNA-capping enzyme is composed of two separate chains alpha and beta, respectively a mRNA guanylyltransferase and an mRNA 5'-triphosphate monophosphatase.

It is found in the nucleus. The catalysed reaction is a 5'-end diphospho-ribonucleoside in mRNA + GTP + H(+) = a 5'-end (5'-triphosphoguanosine)-ribonucleoside in mRNA + diphosphate. Its function is as follows. Second step of mRNA capping. Transfer of the GMP moiety of GTP to the 5'-end of RNA via an enzyme-GMP covalent reaction intermediate. The chain is mRNA-capping enzyme subunit alpha (CEG1) from Candida glabrata (strain ATCC 2001 / BCRC 20586 / JCM 3761 / NBRC 0622 / NRRL Y-65 / CBS 138) (Yeast).